Here is a 264-residue protein sequence, read N- to C-terminus: 1H-3-hydroxy-4-oxoquinoline 2,4-dioxygenase (264 aa).

Substrate contacts are provided by residues 30–32 (WCQ), 94–95 (TS), and tryptophan 153. Histidine 244 (proton donor/acceptor) is an active-site residue.

It belongs to the AB hydrolase superfamily. The cofactor is None. Contrary to most other dioxygenases, this enzyme does not require a cofactor for catalysis..

It carries out the reaction 3-hydroxy-1H-quinolin-4-one + O2 = N-formylanthranilate + CO + H(+). In terms of biological role, ring-cleaving dioxygenase involved in oxoquinoline degradation and utilization. This chain is 1H-3-hydroxy-4-oxoquinoline 2,4-dioxygenase (qdo), found in Pseudomonas putida (Arthrobacter siderocapsulatus).